A 141-amino-acid polypeptide reads, in one-letter code: Protein C19orf12 (141 aa).

A helical transmembrane segment spans residues 40-60 (FVGGLVGGPPGLAVGGAVGGL).

The protein belongs to the C19orf12 family.

It localises to the mitochondrion. Its subcellular location is the mitochondrion membrane. The protein localises to the endoplasmic reticulum. The protein resides in the cytoplasm. It is found in the cytosol. This Homo sapiens (Human) protein is Protein C19orf12 (C19orf12).